A 420-amino-acid chain; its full sequence is ATP phosphoribosyltransferase regulatory subunit (420 aa).

It belongs to the class-II aminoacyl-tRNA synthetase family. HisZ subfamily. In terms of assembly, heteromultimer composed of HisG and HisZ subunits.

The protein resides in the cytoplasm. The protein operates within amino-acid biosynthesis; L-histidine biosynthesis; L-histidine from 5-phospho-alpha-D-ribose 1-diphosphate: step 1/9. Functionally, required for the first step of histidine biosynthesis. May allow the feedback regulation of ATP phosphoribosyltransferase activity by histidine. The chain is ATP phosphoribosyltransferase regulatory subunit from Bacillus cereus (strain B4264).